The chain runs to 477 residues: FAD-dependent monooxygenase paxM (477 aa).

The chain crosses the membrane as a helical span at residues 4–24 (AEFQVIIVGGSIGGLTLAHCL). FAD-binding residues include Glu35, Gly49, and Arg108. Residue Arg195 is part of the active site. FAD is bound by residues Asp308 and Ala321. A helical transmembrane segment spans residues 446-466 (LMIYLFGLTIVYTSLTMMFDL).

It belongs to the paxM FAD-dependent monooxygenase family. FAD serves as cofactor.

It localises to the membrane. It functions in the pathway secondary metabolite biosynthesis. Functionally, FAD-dependent monooxygenase; part of the gene cluster that mediates the biosynthesis of paxilline, a mycotoxin that acts as an inhibitor of mammalian maxi-K channels. PaxG, the geranylgeranyl diphosphate (GGPP) synthase is proposed to catalyze the first step in paxilline biosynthesis. Condensation of indole-3-glycerol phosphate with GGPP by paxC then forms 3-geranylgeranylindole (3-GGI), followed by epoxidation and cyclization of this intermediate (by paxM and paxB) to form paspaline. Paspaline is subsequently converted to 13-desoxypaxilline by paxP, the latter being then converted to paxilline by paxQ. Finally paxilline can be mono- and di-prenylated by paxD. The protein is FAD-dependent monooxygenase paxM of Penicillium paxilli.